Consider the following 367-residue polypeptide: dTDP-4-amino-4,6-dideoxy-D-glucose transaminase (367 aa).

Position 184 is an N6-(pyridoxal phosphate)lysine (Lys184).

The protein belongs to the DegT/DnrJ/EryC1 family. Pyridoxal 5'-phosphate is required as a cofactor.

It catalyses the reaction dTDP-4-amino-4,6-dideoxy-D-glucose + 2-oxoglutarate = dTDP-4-dehydro-6-deoxy-alpha-D-glucose + L-glutamate. Its pathway is bacterial outer membrane biogenesis; lipopolysaccharide biosynthesis. In terms of biological role, catalyzes the conversion of dTDP-4-dehydro-6-deoxy-D-glucose (dTDP-D-Glc4O) to dTDP-4-amino-4,6-dideoxy-D-glucose (dTDP-D-Qui4N). L-glutamine can also be used as amino donor. This is dTDP-4-amino-4,6-dideoxy-D-glucose transaminase (vioA) from Shigella dysenteriae.